We begin with the raw amino-acid sequence, 356 residues long: MGLLRIMLPPKLQLLAVLVFGVAVLFLENQIQKLEESRGKLERAIARHEVREIEQRHTADGPRQEVALDEEDDVVIIYNRVPKTASTSFTNIAYDLCAKNRYHVLHINTTKNNPVMSLQDQVRFVKNVTSWKEMKPGFYHGHVSYLDFAKFGVKKKPIYINVIRDPIERLVSYYYFLRFGDDYRPGLRRRKQGDKKTFDECVAAGGSDCAPEKLWLQIPFFCGHSSECWNVGSRWALEQAKYNLINEYFLVGVTEELEDFIMLLEAALPRFFRGATELYRTGKKSHLRKTTEKKLPTKETIAKLQQSEIWKMENEFYEFALEQFQFVRAHAVREKDGELYILAQNFFYEKIYPKSN.

Over M1 to K11 the chain is Cytoplasmic. Residues L12 to E28 traverse the membrane as a helical; Signal-anchor for type II membrane protein segment. A coiled-coil region spans residues V24–R51. The Lumenal portion of the chain corresponds to N29–N356. Adenosine 3',5'-bisphosphate-binding residues include K83, T84, A85, S86, T87, and S88. 2 N-linked (GlcNAc...) asparagine glycosylation sites follow: N108 and N127. Catalysis depends on residues H140 and H142. Adenosine 3',5'-bisphosphate-binding residues include R164 and S172. 2 disulfides stabilise this stretch: C201-C209 and C222-C228. 4 residues coordinate adenosine 3',5'-bisphosphate: Y279, S285, T290, and K293.

Belongs to the sulfotransferase 3 family. Homotrimer. Expressed in heart, limb, head and trunk. At stages 20 and 24, it is expressed in the most regions of the first and second pharyngeal arche. In both wing and leg buds, it is detected at the overlying ectoderm and mesenchyme throughout stages 21, 23 and 24.

The protein localises to the golgi apparatus membrane. In terms of biological role, catalyzes the transfer of a sulfo group from 3'-phospho-5'-adenylyl sulfate (PAPS) to the 2-OH position of iduronic acid (IdoA) or glucuronic acid (GlcA) within the heparan sulfate (HS) chain and participates in HS biosynthesis. This chain is Heparan sulfate 2-O-sulfotransferase 1, found in Gallus gallus (Chicken).